The sequence spans 389 residues: D-alanyl-D-alanine carboxypeptidase DacF (389 aa).

The first 23 residues, 1 to 23, serve as a signal peptide directing secretion; it reads MKRLLSTLLIGIMLLTFAPSAFA. Ser-64 acts as the Acyl-ester intermediate in catalysis. The active-site Proton acceptor is Lys-67. Ser-124 is a catalytic residue. Lys-230 is a binding site for substrate.

Belongs to the peptidase S11 family.

It is found in the secreted. The enzyme catalyses Preferential cleavage: (Ac)2-L-Lys-D-Ala-|-D-Ala. Also transpeptidation of peptidyl-alanyl moieties that are N-acyl substituents of D-alanine.. It functions in the pathway cell wall biogenesis; peptidoglycan biosynthesis. Removes C-terminal D-alanyl residues from sugar-peptide cell wall precursors. This Bacillus subtilis (strain 168) protein is D-alanyl-D-alanine carboxypeptidase DacF (dacF).